A 324-amino-acid chain; its full sequence is dITP/XTP pyrophosphatase (324 aa).

The segment at M1–I127 is unknown. Residues L128–N324 are NTP pyrophosphatase. Substrate is bound at residue T131–K136. The Mg(2+) site is built by E164 and D193. D193 functions as the Proton acceptor in the catalytic mechanism. Substrate contacts are provided by residues S194, F277 to D280, K300, and H305 to R306.

The protein belongs to the HAM1 NTPase family. As to quaternary structure, homodimer. Mg(2+) is required as a cofactor.

The enzyme catalyses XTP + H2O = XMP + diphosphate + H(+). It carries out the reaction dITP + H2O = dIMP + diphosphate + H(+). It catalyses the reaction ITP + H2O = IMP + diphosphate + H(+). In terms of biological role, pyrophosphatase that catalyzes the hydrolysis of nucleoside triphosphates to their monophosphate derivatives, with a high preference for the non-canonical purine nucleotides XTP (xanthosine triphosphate), dITP (deoxyinosine triphosphate) and ITP. Seems to function as a house-cleaning enzyme that removes non-canonical purine nucleotides from the nucleotide pool, thus preventing their incorporation into DNA/RNA and avoiding chromosomal lesions. The protein is dITP/XTP pyrophosphatase of Streptococcus agalactiae serotype III (strain NEM316).